Reading from the N-terminus, the 298-residue chain is Elongation factor Ts (298 aa).

An involved in Mg(2+) ion dislocation from EF-Tu region spans residues 80–83; sequence TDFV.

Belongs to the EF-Ts family.

The protein resides in the cytoplasm. Its function is as follows. Associates with the EF-Tu.GDP complex and induces the exchange of GDP to GTP. It remains bound to the aminoacyl-tRNA.EF-Tu.GTP complex up to the GTP hydrolysis stage on the ribosome. In Paracidovorax citrulli (strain AAC00-1) (Acidovorax citrulli), this protein is Elongation factor Ts.